A 330-amino-acid chain; its full sequence is Beta-ketoacyl-[acyl-carrier-protein] synthase III (330 aa).

Catalysis depends on residues Cys-118 and His-257. The ACP-binding stretch occupies residues 258-262 (QANLR). Asn-287 is a catalytic residue.

Belongs to the thiolase-like superfamily. FabH family. Homodimer.

The protein localises to the cytoplasm. It catalyses the reaction malonyl-[ACP] + acetyl-CoA + H(+) = 3-oxobutanoyl-[ACP] + CO2 + CoA. Its pathway is lipid metabolism; fatty acid biosynthesis. In terms of biological role, catalyzes the condensation reaction of fatty acid synthesis by the addition to an acyl acceptor of two carbons from malonyl-ACP. Catalyzes the first condensation reaction which initiates fatty acid synthesis and may therefore play a role in governing the total rate of fatty acid production. Possesses both acetoacetyl-ACP synthase and acetyl transacylase activities. Its substrate specificity determines the biosynthesis of branched-chain and/or straight-chain of fatty acids. This chain is Beta-ketoacyl-[acyl-carrier-protein] synthase III, found in Nitratidesulfovibrio vulgaris (strain DSM 19637 / Miyazaki F) (Desulfovibrio vulgaris).